Here is a 223-residue protein sequence, read N- to C-terminus: MANRGHTQPRALAWALGLTLVWILLGACGGSRPLPALSRRHHRLAADLGTGQLHLAEMDTPEASGPGMVSEHCGKPSPGCESFLGHLQVALHNRFRLLLLGIRQAQPLCSELCDIWFATCESDITCGPTWLPLLEKRGCEPRCTTYEQTFADGADLCRSVLGYALPVAAPGADHCLNISISVLPGSRQERKAQEVTFPRSRRSRTWILDAPGSGSGSGSGSGP.

Residues methionine 1–glycine 30 form the signal peptide. 4 disulfide bridges follow: cysteine 73-cysteine 143, cysteine 80-cysteine 120, cysteine 113-cysteine 157, and cysteine 126-cysteine 139.

This sequence belongs to the folate receptor family. Not N-glycosylated.

The protein localises to the secreted. It is found in the extracellular space. It localises to the extracellular matrix. Its subcellular location is the interphotoreceptor matrix. The protein resides in the cell membrane. In terms of biological role, riboflavin-binding protein which might have a role in retinal flavin transport. The polypeptide is Retbindin (RTBDN) (Canis lupus familiaris (Dog)).